Consider the following 116-residue polypeptide: uncharacterized protein (116 aa).

This is an uncharacterized protein from Homo sapiens (Human).